A 1029-amino-acid chain; its full sequence is Multidrug resistance protein MdtC (1029 aa).

Helical transmembrane passes span 15–35, 333–353, 360–380, 387–407, 431–451, 469–489, 528–548, 853–873, 897–917, 953–973, and 984–1004; these read ILLS…LPVA, EVEQ…FLFL, LIPA…MYLC, LSLM…IVAL, VGFT…PLLL, VAIG…CGWL, LVGL…ISIP, VILI…LYES, AFDA…IGIV, PIMM…IASG, and ITIV…TPVV.

The protein belongs to the resistance-nodulation-cell division (RND) (TC 2.A.6) family. MdtC subfamily. In terms of assembly, part of a tripartite efflux system composed of MdtA, MdtB and MdtC. MdtC forms a heteromultimer with MdtB.

The protein localises to the cell inner membrane. The polypeptide is Multidrug resistance protein MdtC (Cronobacter sakazakii (strain ATCC BAA-894) (Enterobacter sakazakii)).